A 144-amino-acid chain; its full sequence is D-aminoacyl-tRNA deacylase (144 aa).

Residues 136-137 (GP) carry the Gly-cisPro motif, important for rejection of L-amino acids motif.

This sequence belongs to the DTD family. Homodimer.

The protein localises to the cytoplasm. It catalyses the reaction glycyl-tRNA(Ala) + H2O = tRNA(Ala) + glycine + H(+). The enzyme catalyses a D-aminoacyl-tRNA + H2O = a tRNA + a D-alpha-amino acid + H(+). Functionally, an aminoacyl-tRNA editing enzyme that deacylates mischarged D-aminoacyl-tRNAs. Also deacylates mischarged glycyl-tRNA(Ala), protecting cells against glycine mischarging by AlaRS. Acts via tRNA-based rather than protein-based catalysis; rejects L-amino acids rather than detecting D-amino acids in the active site. By recycling D-aminoacyl-tRNA to D-amino acids and free tRNA molecules, this enzyme counteracts the toxicity associated with the formation of D-aminoacyl-tRNA entities in vivo and helps enforce protein L-homochirality. This chain is D-aminoacyl-tRNA deacylase, found in Haemophilus influenzae (strain PittGG).